We begin with the raw amino-acid sequence, 402 residues long: MYLTREEERILAGEEGEARAKALEVIVKVGEAVGAERLIPIKHAHVSGASYMTIGDAGLRFLARLAESGARFSVPTTVNPVSYDVEEPGAIPMTRLSPRIVKAQSEILKALEAMGADLILTCTPYYTEVPRRVGLREGDSVAWGESSAVAYANSVLGIHTNREGGPLALMAGIAGRTYFYGAHDPEWRKPRVAYRLETPKVLDETEAGVLGEVIATQHRDEHPPLLDAPLGGEAALKEFSAAVGSAGSLAMVHITGVTPGDPGDMIEEVVTMDYGDLARRMEDLAPGFEPDILYVGCPHASIEELRRLYRALSKAGERAGRRTVVSISRSLYLQALREGLVEKLKGLGVRFVRDSCLIVSPFSSGARGVRVATNSYKAYFYLSKKGVEVGLAPIEALPKLVS.

5 residues coordinate (R)-5-phosphomevalonate: G48, A49, S50, N79, and P80. Residue C122 participates in [4Fe-4S] cluster binding. (R)-5-phosphomevalonate is bound by residues E145 and S146. Residues C297 and C356 each coordinate [4Fe-4S] cluster. (R)-5-phosphomevalonate is bound at residue K377.

It belongs to the AcnX type II large subunit family. As to quaternary structure, heterodimer composed of a large subunit (PMDh-L) and a small subunit (PMDh-S). The cofactor is [4Fe-4S] cluster.

The catalysed reaction is (R)-5-phosphomevalonate = (2E)-3-methyl-5-phosphooxypent-2-enoate + H2O. It functions in the pathway isoprenoid biosynthesis; isopentenyl diphosphate biosynthesis via mevalonate pathway. With respect to regulation, neither the addition of 1 mM Mg(2+) nor 1 mM Mn(2+) has a significant effect on the activity, whereas Zn(2+) causes almost complete inactivation. Strongly inhibited by H(2)O(2), but not by EDTA or iodoacetamide. Functionally, component of a hydro-lyase that catalyzes the dehydration of mevalonate 5-phosphate (MVA5P) to form trans-anhydromevalonate 5-phosphate (tAHMP). Involved in the archaeal mevalonate (MVA) pathway, which provides fundamental precursors for isoprenoid biosynthesis, such as isopentenyl diphosphate (IPP) and dimethylallyl diphosphate (DMAPP). This Aeropyrum pernix (strain ATCC 700893 / DSM 11879 / JCM 9820 / NBRC 100138 / K1) protein is Phosphomevalonate dehydratase large subunit.